The sequence spans 569 residues: Proline--tRNA ligase (569 aa).

This sequence belongs to the class-II aminoacyl-tRNA synthetase family. ProS type 1 subfamily. Homodimer.

Its subcellular location is the cytoplasm. It catalyses the reaction tRNA(Pro) + L-proline + ATP = L-prolyl-tRNA(Pro) + AMP + diphosphate. Its function is as follows. Catalyzes the attachment of proline to tRNA(Pro) in a two-step reaction: proline is first activated by ATP to form Pro-AMP and then transferred to the acceptor end of tRNA(Pro). As ProRS can inadvertently accommodate and process non-cognate amino acids such as alanine and cysteine, to avoid such errors it has two additional distinct editing activities against alanine. One activity is designated as 'pretransfer' editing and involves the tRNA(Pro)-independent hydrolysis of activated Ala-AMP. The other activity is designated 'posttransfer' editing and involves deacylation of mischarged Ala-tRNA(Pro). The misacylated Cys-tRNA(Pro) is not edited by ProRS. This Desulforamulus reducens (strain ATCC BAA-1160 / DSM 100696 / MI-1) (Desulfotomaculum reducens) protein is Proline--tRNA ligase.